The chain runs to 392 residues: DNA-directed RNA polymerase subunit Rpo1C (392 aa).

It belongs to the RNA polymerase beta' chain family. In terms of assembly, part of the RNA polymerase complex.

Its subcellular location is the cytoplasm. The enzyme catalyses RNA(n) + a ribonucleoside 5'-triphosphate = RNA(n+1) + diphosphate. Functionally, DNA-dependent RNA polymerase (RNAP) catalyzes the transcription of DNA into RNA using the four ribonucleoside triphosphates as substrates. Forms part of the jaw domain. The polypeptide is DNA-directed RNA polymerase subunit Rpo1C (Sulfurisphaera tokodaii (strain DSM 16993 / JCM 10545 / NBRC 100140 / 7) (Sulfolobus tokodaii)).